Reading from the N-terminus, the 298-residue chain is Small ribosomal subunit protein uS3 (298 aa).

In terms of domain architecture, KH type-2 spans V39–R107. The disordered stretch occupies residues P214 to E298. Basic and acidic residues predominate over residues A219 to A245. Residues K277–E298 show a composition bias toward low complexity.

The protein belongs to the universal ribosomal protein uS3 family. In terms of assembly, part of the 30S ribosomal subunit. Forms a tight complex with proteins S10 and S14.

Its function is as follows. Binds the lower part of the 30S subunit head. Binds mRNA in the 70S ribosome, positioning it for translation. The protein is Small ribosomal subunit protein uS3 of Albidiferax ferrireducens (strain ATCC BAA-621 / DSM 15236 / T118) (Rhodoferax ferrireducens).